We begin with the raw amino-acid sequence, 126 residues long: Fluoride-specific ion channel FluC (126 aa).

A run of 4 helical transmembrane segments spans residues Pro4–Leu24, Ile33–Ala53, Phe67–Val87, and Met97–Leu117. Residues Gly74 and Thr77 each coordinate Na(+).

The protein belongs to the fluoride channel Fluc/FEX (TC 1.A.43) family.

It localises to the cell inner membrane. The catalysed reaction is fluoride(in) = fluoride(out). Na(+) is not transported, but it plays an essential structural role and its presence is essential for fluoride channel function. Fluoride-specific ion channel. Important for reducing fluoride concentration in the cell, thus reducing its toxicity. The sequence is that of Fluoride-specific ion channel FluC from Acinetobacter baumannii (strain SDF).